The chain runs to 123 residues: Large ribosomal subunit protein uL29 (123 aa).

It belongs to the universal ribosomal protein uL29 family.

The polypeptide is Large ribosomal subunit protein uL29 (rpl-35) (Caenorhabditis elegans).